The sequence spans 202 residues: Putative 3-methyladenine DNA glycosylase (202 aa).

Belongs to the DNA glycosylase MPG family.

The polypeptide is Putative 3-methyladenine DNA glycosylase (Staphylococcus aureus (strain bovine RF122 / ET3-1)).